The chain runs to 140 residues: Photosystem I reaction center subunit XI (140 aa).

The next 3 helical transmembrane spans lie at 48-68 (LEIGMAHGYFLIGPFVQLGPL), 79-99 (LLSAIGLIVILTLGMLLYGAV), and 119-139 (SGFLLGAVGGAGFAYLLLTLF).

This sequence belongs to the PsaL family.

Its subcellular location is the plastid. It is found in the chloroplast thylakoid membrane. The polypeptide is Photosystem I reaction center subunit XI (Cyanidioschyzon merolae (strain NIES-3377 / 10D) (Unicellular red alga)).